A 246-amino-acid chain; its full sequence is ATP synthase subunit a (246 aa).

The propeptide at M1–Y3 is removed in mature form. 7 consecutive transmembrane segments (helical) span residues V25–L45, L51–V71, G79–V99, L112–S132, F138–I158, V178–S198, and F203–I223.

It belongs to the ATPase A chain family. As to quaternary structure, F-type ATPases have 2 components, CF(1) - the catalytic core - and CF(0) - the membrane proton channel. CF(1) has five subunits: alpha(3), beta(3), gamma(1), delta(1), epsilon(1). CF(0) has three main subunits: a, b and c.

It is found in the mitochondrion inner membrane. Its function is as follows. Mitochondrial membrane ATP synthase (F(1)F(0) ATP synthase or Complex V) produces ATP from ADP in the presence of a proton gradient across the membrane which is generated by electron transport complexes of the respiratory chain. F-type ATPases consist of two structural domains, F(1) - containing the extramembraneous catalytic core and F(0) - containing the membrane proton channel, linked together by a central stalk and a peripheral stalk. During catalysis, ATP synthesis in the catalytic domain of F(1) is coupled via a rotary mechanism of the central stalk subunits to proton translocation. Key component of the proton channel; it may play a direct role in the translocation of protons across the membrane. This is ATP synthase subunit a (ATP6) from Debaryomyces hansenii (strain ATCC 36239 / CBS 767 / BCRC 21394 / JCM 1990 / NBRC 0083 / IGC 2968) (Yeast).